The sequence spans 164 residues: Phosphopantetheine adenylyltransferase (164 aa).

Serine 9 serves as a coordination point for substrate. ATP contacts are provided by residues 9–10 and histidine 17; that span reads SF. Substrate contacts are provided by lysine 41, leucine 73, and arginine 87. ATP is bound by residues glutamate 98 and 122–128; that span reads YSFLSSS.

This sequence belongs to the bacterial CoaD family. As to quaternary structure, homohexamer. Mg(2+) is required as a cofactor.

It localises to the cytoplasm. The enzyme catalyses (R)-4'-phosphopantetheine + ATP + H(+) = 3'-dephospho-CoA + diphosphate. Its pathway is cofactor biosynthesis; coenzyme A biosynthesis; CoA from (R)-pantothenate: step 4/5. Reversibly transfers an adenylyl group from ATP to 4'-phosphopantetheine, yielding dephospho-CoA (dPCoA) and pyrophosphate. The polypeptide is Phosphopantetheine adenylyltransferase (Thermobifida fusca (strain YX)).